We begin with the raw amino-acid sequence, 117 residues long: Iron-sulfur cluster insertion protein ErpA (117 aa).

Cysteine 45, cysteine 109, and cysteine 111 together coordinate iron-sulfur cluster.

The protein belongs to the HesB/IscA family. Homodimer. Requires iron-sulfur cluster as cofactor.

Functionally, required for insertion of 4Fe-4S clusters for at least IspG. In Ruthia magnifica subsp. Calyptogena magnifica, this protein is Iron-sulfur cluster insertion protein ErpA.